Reading from the N-terminus, the 178-residue chain is Aspartic proteinase nepenthesin-2 (178 aa).

Asp98 is a catalytic residue.

It belongs to the peptidase A1 family.

It is found in the secreted. It catalyses the reaction Similar to pepsin, but also cleaves on either side of Asp and at Lys-|-Arg.. With respect to regulation, inhibited by pepstatin and by diazoacetyl-D,L-norleucine methyl ester (DAN) in the presence of Cu(2+) ions. Extracellular proteinase found in the pitcher fluid of carnivorous plants. Digest prey for nitrogen uptake. This Nepenthes distillatoria (Pitcher plant) protein is Aspartic proteinase nepenthesin-2.